The chain runs to 89 residues: Small ribosomal subunit protein uS15 (89 aa).

The protein belongs to the universal ribosomal protein uS15 family. Part of the 30S ribosomal subunit. Forms a bridge to the 50S subunit in the 70S ribosome, contacting the 23S rRNA.

Functionally, one of the primary rRNA binding proteins, it binds directly to 16S rRNA where it helps nucleate assembly of the platform of the 30S subunit by binding and bridging several RNA helices of the 16S rRNA. In terms of biological role, forms an intersubunit bridge (bridge B4) with the 23S rRNA of the 50S subunit in the ribosome. This chain is Small ribosomal subunit protein uS15, found in Acinetobacter baylyi (strain ATCC 33305 / BD413 / ADP1).